The sequence spans 460 residues: Cation efflux system protein CusC (460 aa).

A signal peptide spans 1-17 (MSPCKLLPFCVALALTG). A lipid anchor (N-palmitoyl cysteine) is attached at cysteine 18. Cysteine 18 is lipidated: S-diacylglycerol cysteine.

Belongs to the outer membrane factor (OMF) (TC 1.B.17) family. Homotrimer. Component of the cus efflux system composed of CusA, CusB, CusC and CusF.

The protein resides in the cell outer membrane. Functionally, forms pores that allow passive diffusion of cations across the outer membrane. Part of a cation efflux system that mediates resistance to copper and silver. This Escherichia coli O157:H7 protein is Cation efflux system protein CusC (cusC).